The chain runs to 602 residues: DEAD-box ATP-dependent RNA helicase 52A (602 aa).

A disordered region spans residues 9-31 (KSVEAGGEPGGGGGGAWSTVSRS). The segment covering 15 to 24 (GEPGGGGGGA) has biased composition (gly residues). Positions 84-112 (DGFEAAGLVEAVLRNVARCGYESPTPVQR) match the Q motif motif. The Helicase ATP-binding domain occupies 115–305 (MPIALAGRDL…SDFLSNYIFI (191 aa)). 128-135 (AQTGSGKT) lines the ATP pocket. Residues 249-252 (DEAD) carry the DEAD box motif. The region spanning 328–485 (EKRGYLLDLL…DVPDWLVQYA (158 aa)) is the Helicase C-terminal domain. Disordered stretches follow at residues 492 to 521 (GSSYGGRNRRSGGGGNRFAGRDFRQGSGGG) and 552 to 602 (RGGG…SGWD). Positions 552 to 574 (RGGGYSRGGRGGYSGGGGGGGGD) are enriched in gly residues.

The protein belongs to the DEAD box helicase family. DDX3/DED1 subfamily.

The catalysed reaction is ATP + H2O = ADP + phosphate + H(+). The polypeptide is DEAD-box ATP-dependent RNA helicase 52A (Oryza sativa subsp. japonica (Rice)).